The chain runs to 367 residues: Leu/Ile/Val-binding protein BraC3 (367 aa).

The N-terminal stretch at 1-22 (MTLKTLTATLVASLAFAPLAHA) is a signal peptide.

The protein belongs to the leucine-binding protein family. The complex is composed of two ATP-binding proteins (BraF and BraG), two transmembrane proteins (BraD and BraE) and a solute-binding protein (BraC or BraC3).

It is found in the periplasm. Its function is as follows. Part of the ABC transporter complex BraDEFGC/C3 involved in transport of branched-chain amino acids Leu, Ile and Val (LIV). Essential for the development of bacteroids, the differentiated legume-symbiotic forms of this bacterium, and for the effective N(2) fixation by them. The sequence is that of Leu/Ile/Val-binding protein BraC3 from Rhizobium johnstonii (strain DSM 114642 / LMG 32736 / 3841) (Rhizobium leguminosarum bv. viciae).